The following is a 474-amino-acid chain: SPQXETKASVGFKAGVKDYKLTYYTPDYKTKDTDILAAFRVTPQPGVPPEEAGAAVAAESSTGTWTTVWTDGLTSLDRYKGRCYHIEPVAGEENHFIAYVAYPLDLFEEGSVTNMFTSIVGNVFGFKALRALRLEDLRIPPAYSKTFQGPPHGIQVERDKLNKYGRPLLGCTIKPKLGLSAKNYGRAVYECLRGGLDFTKDDENVNSQPFMRWRDRFVFCAEAIYKAQAETGEIKGHYLNATAGTCEEMIKRAVFARELGVPIIMHDYLTGGFTANTSLAHYCRDNGLLLHIHRAMHAVIDRQKNHGIHFRVLAKALRMSGGDHIHSGTVVGKLEGERDITLGFVDLLRDDFIAKDRSRGIYFTQDWVSLPGVLPVASGGIHVWHMPALTEIFGDDSVLQFGGGTLGHPWGNAPGAVANRVALEACVQARNEGRDLAREGNEIIREASKWSPELAAACEVWKEIKFEFQAVDTL.

Lys-13 is subject to N6,N6,N6-trimethyllysine. 2 residues coordinate substrate: Asn-122 and Thr-172. The active-site Proton acceptor is Lys-174. Substrate is bound at residue Lys-176. Lys-200, Asp-202, and Glu-203 together coordinate Mg(2+). At Lys-200 the chain carries N6-carboxylysine. The active-site Proton acceptor is His-293. 3 residues coordinate substrate: Arg-294, His-326, and Ser-378.

The protein belongs to the RuBisCO large chain family. Type I subfamily. Heterohexadecamer of 8 large chains and 8 small chains; disulfide-linked. The disulfide link is formed within the large subunit homodimers. It depends on Mg(2+) as a cofactor. The disulfide bond which can form in the large chain dimeric partners within the hexadecamer appears to be associated with oxidative stress and protein turnover.

It localises to the plastid. Its subcellular location is the chloroplast. The enzyme catalyses 2 (2R)-3-phosphoglycerate + 2 H(+) = D-ribulose 1,5-bisphosphate + CO2 + H2O. It carries out the reaction D-ribulose 1,5-bisphosphate + O2 = 2-phosphoglycolate + (2R)-3-phosphoglycerate + 2 H(+). RuBisCO catalyzes two reactions: the carboxylation of D-ribulose 1,5-bisphosphate, the primary event in carbon dioxide fixation, as well as the oxidative fragmentation of the pentose substrate in the photorespiration process. Both reactions occur simultaneously and in competition at the same active site. In Dendrophthora clavata (Columbian mistletoe), this protein is Ribulose bisphosphate carboxylase large chain.